Here is a 145-residue protein sequence, read N- to C-terminus: Probable low molecular weight protein-tyrosine-phosphatase EpsP (145 aa).

The active-site Nucleophile is the cysteine 9. Residue arginine 15 is part of the active site. Aspartate 114 (proton donor) is an active-site residue.

The protein belongs to the low molecular weight phosphotyrosine protein phosphatase family.

The enzyme catalyses O-phospho-L-tyrosyl-[protein] + H2O = L-tyrosyl-[protein] + phosphate. It functions in the pathway glycan metabolism; exopolysaccharide biosynthesis. Functionally, may be involved in assembly or function of the EPS I polymerization/export complex and/or the EpsB ATPase. Alternatively it may function in the removal of the terminal phosphate from C55-isoprenyl pyrophosphate in order to recycle the C55-isoprenyl phosphate lipid carrier used in the synthesis of polysaccharide repeat units. In Ralstonia nicotianae (strain ATCC BAA-1114 / GMI1000) (Ralstonia solanacearum), this protein is Probable low molecular weight protein-tyrosine-phosphatase EpsP (epsP).